The chain runs to 37 residues: Large ribosomal subunit protein bL36 (37 aa).

This sequence belongs to the bacterial ribosomal protein bL36 family.

The polypeptide is Large ribosomal subunit protein bL36 (rpmJ) (Mycoplasmoides gallisepticum (strain R(low / passage 15 / clone 2)) (Mycoplasma gallisepticum)).